Reading from the N-terminus, the 662-residue chain is DNA ligase (662 aa).

NAD(+) is bound by residues D32–D36, S75–L76, and E106. The N6-AMP-lysine intermediate role is filled by K108. Residues R129, E164, K271, and K295 each coordinate NAD(+). Zn(2+)-binding residues include C389, C392, C407, and C413. One can recognise a BRCT domain in the interval S580–K662.

It belongs to the NAD-dependent DNA ligase family. LigA subfamily. Mg(2+) serves as cofactor. It depends on Mn(2+) as a cofactor.

It carries out the reaction NAD(+) + (deoxyribonucleotide)n-3'-hydroxyl + 5'-phospho-(deoxyribonucleotide)m = (deoxyribonucleotide)n+m + AMP + beta-nicotinamide D-nucleotide.. Functionally, DNA ligase that catalyzes the formation of phosphodiester linkages between 5'-phosphoryl and 3'-hydroxyl groups in double-stranded DNA using NAD as a coenzyme and as the energy source for the reaction. It is essential for DNA replication and repair of damaged DNA. The protein is DNA ligase of Wolbachia pipientis wMel.